The primary structure comprises 221 residues: Dynein light chain Tctex-type 4 (221 aa).

Disordered regions lie at residues 1–52 (MASR…SRRG) and 65–87 (NSLV…VPPL). Residues 10–21 (RQEEENAKDSGR) are compositionally biased toward basic and acidic residues. Serine 66 bears the Phosphoserine mark.

The protein belongs to the dynein light chain Tctex-type family. Interacts with ENG/endoglin, TGFBR2 and TGFBR3. Interacts with PPP1CC. In terms of tissue distribution, ubiquitously expressed. Expressed in testis (at protein level).

Its subcellular location is the cell projection. It is found in the cilium. The protein resides in the flagellum. The protein localises to the cytoplasmic vesicle. It localises to the secretory vesicle. Its subcellular location is the acrosome. It is found in the cytoplasm. The protein resides in the cytoskeleton. The protein localises to the cilium axoneme. It localises to the nucleus. Its subcellular location is the microtubule organizing center. This chain is Dynein light chain Tctex-type 4, found in Homo sapiens (Human).